The chain runs to 85 residues: V-type proton ATPase subunit f (85 aa).

The next 2 membrane-spanning stretches (helical) occupy residues 13-33 (CTGL…LFSI) and 56-76 (CLGA…QVIV).

As to quaternary structure, V-ATPase is a heteromultimeric enzyme composed of a peripheral catalytic V1 complex (components A to H) attached to an integral membrane V0 proton pore complex (components: a, c, c', c'', d, e, f and VOA1).

The protein resides in the endoplasmic reticulum membrane. Accessory component of the V0 complex of vacuolar(H+)-ATPase (V-ATPase), a multisubunit enzyme composed of a peripheral complex (V1) that hydrolyzes ATP and a membrane integral complex (V0) that translocates protons. V-ATPase is responsible for acidifying and maintaining the pH of intracellular compartments. The polypeptide is V-type proton ATPase subunit f (Schizosaccharomyces pombe (strain 972 / ATCC 24843) (Fission yeast)).